The primary structure comprises 305 residues: Superkiller complex protein 8 (305 aa).

7 WD repeats span residues Ala-14–Gln-57, Gly-62–Ala-101, Ala-104–Ser-143, Thr-146–Glu-187, Gly-188–Thr-227, Gly-230–Thr-269, and Asp-272–Ile-305.

Belongs to the SKI8 family. Component of the PAF1 complex. Component of the SKI complex.

The protein resides in the nucleus. The protein localises to the cytoplasm. Its function is as follows. Component of the PAF1 complex (PAF1C) which has multiple functions during transcription by RNA polymerase II and is implicated in regulation of development and maintenance of embryonic stem cell pluripotency. PAF1C associates with RNA polymerase II through interaction with POLR2A CTD non-phosphorylated and 'Ser-2'- and 'Ser-5'-phosphorylated forms and is involved in transcriptional elongation, acting both independently and synergistically with TCEA1 and in cooperation with the DSIF complex and HTATSF1. Also acts as a component of the SKI complex, a multiprotein complex that assists the RNA-degrading exosome during the mRNA decay and quality-control pathways. The SKI complex catalyzes mRNA extraction from 80S ribosomal complexes in the 3'-5' direction and channels mRNA to the cytosolic exosome for degradation. This Xenopus tropicalis (Western clawed frog) protein is Superkiller complex protein 8 (skic8).